Consider the following 266-residue polypeptide: Inositol-1-monophosphatase (266 aa).

E69, D86, L88, and D89 together coordinate Mg(2+). E69 provides a ligand contact to substrate. Substrate-binding positions include 88-91 (LDGT), R185, and D214. D214 is a Mg(2+) binding site.

This sequence belongs to the inositol monophosphatase superfamily. Requires Mg(2+) as cofactor.

It carries out the reaction a myo-inositol phosphate + H2O = myo-inositol + phosphate. In Rhizobium meliloti (strain 1021) (Ensifer meliloti), this protein is Inositol-1-monophosphatase (suhB).